Consider the following 299-residue polypeptide: S-methyl-5'-thioadenosine phosphorylase (299 aa).

Phosphate is bound by residues S14, 56-57 (RH), and 89-90 (SA). M191 lines the substrate pocket. T192 contributes to the phosphate binding site. A substrate-binding site is contributed by 215–217 (DYD).

It belongs to the PNP/MTAP phosphorylase family. MTAP subfamily. In terms of assembly, homohexamer. Dimer of a homotrimer.

It carries out the reaction S-methyl-5'-thioadenosine + phosphate = 5-(methylsulfanyl)-alpha-D-ribose 1-phosphate + adenine. The protein operates within amino-acid biosynthesis; L-methionine biosynthesis via salvage pathway; S-methyl-5-thio-alpha-D-ribose 1-phosphate from S-methyl-5'-thioadenosine (phosphorylase route): step 1/1. Functionally, catalyzes the reversible phosphorylation of S-methyl-5'-thioadenosine (MTA) to adenine and 5-methylthioribose-1-phosphate. Involved in the breakdown of MTA, a major by-product of polyamine biosynthesis. Responsible for the first step in the methionine salvage pathway after MTA has been generated from S-adenosylmethionine. Has broad substrate specificity with 6-aminopurine nucleosides as preferred substrates. This Gloeobacter violaceus (strain ATCC 29082 / PCC 7421) protein is S-methyl-5'-thioadenosine phosphorylase.